The following is a 730-amino-acid chain: Trimethylamine dehydrogenase (730 aa).

Residues Pro-29, Cys-31, Tyr-61, and Glu-104 each coordinate FMN. The residue at position 31 (Cys-31) is an S-6-FMN cysteine. Position 170–173 (170–173 (YGAH)) interacts with substrate. Tyr-175 (proton donor) is an active-site residue. FMN contacts are provided by Arg-223, Asp-268, Arg-300, Ala-322, and Arg-323. Positions 346, 349, 352, and 365 each coordinate [4Fe-4S] cluster. Ser-401, Asp-420, Thr-421, His-428, Met-471, and Asp-675 together coordinate ADP.

In the N-terminal section; belongs to the NADH:flavin oxidoreductase/NADH oxidase family. As to quaternary structure, homodimer. Forms a ternary complex with the heterodimeric electron transfer flavoprotein. The cofactor is FMN. Requires [4Fe-4S] cluster as cofactor.

It carries out the reaction trimethylamine + oxidized [electron-transfer flavoprotein] + H2O + H(+) = dimethylamine + reduced [electron-transfer flavoprotein] + formaldehyde. This chain is Trimethylamine dehydrogenase, found in Methylophilus methylotrophus (Bacterium W3A1).